A 301-amino-acid polypeptide reads, in one-letter code: 2-(hydroxymethyl)glutarate dehydrogenase (301 aa).

Residues 8–22 and Ser99 each bind NAD(+); that span reads GFIG…MAIN. Residue Lys174 is part of the active site. Lys243 lines the NAD(+) pocket.

The protein belongs to the HIBADH-related family. Homotetramer.

It catalyses the reaction (S)-2-hydroxymethylglutarate + NAD(+) = 2-formylglutarate + NADH + H(+). The protein operates within cofactor degradation; nicotinate degradation; propanoate and pyruvate from 6-hydroxynicotinate: step 3/8. Functionally, catalyzes the conversion of 2-formylglutarate to (S)-2-hydroxymethylglutarate. Has very low activity with (S)-3-hydroxyisobutyrate. The polypeptide is 2-(hydroxymethyl)glutarate dehydrogenase (Eubacterium barkeri (Clostridium barkeri)).